Consider the following 443-residue polypeptide: UDP-N-acetylglucosamine 1-carboxyvinyltransferase 1 (443 aa).

22 to 23 (KN) serves as a coordination point for phosphoenolpyruvate. R95 contacts UDP-N-acetyl-alpha-D-glucosamine. Catalysis depends on C119, which acts as the Proton donor. At C119 the chain carries 2-(S-cysteinyl)pyruvic acid O-phosphothioketal. UDP-N-acetyl-alpha-D-glucosamine is bound by residues 124–128 (RPIDL), D308, and V330.

Belongs to the EPSP synthase family. MurA subfamily.

It is found in the cytoplasm. The enzyme catalyses phosphoenolpyruvate + UDP-N-acetyl-alpha-D-glucosamine = UDP-N-acetyl-3-O-(1-carboxyvinyl)-alpha-D-glucosamine + phosphate. It participates in cell wall biogenesis; peptidoglycan biosynthesis. Cell wall formation. Adds enolpyruvyl to UDP-N-acetylglucosamine. The chain is UDP-N-acetylglucosamine 1-carboxyvinyltransferase 1 from Oceanobacillus iheyensis (strain DSM 14371 / CIP 107618 / JCM 11309 / KCTC 3954 / HTE831).